Consider the following 1356-residue polypeptide: Transmembrane protein 94 (1356 aa).

At 1-64 the chain is on the cytoplasmic side; the sequence is MDLKEKHLGE…FLHHSNRCSC (64 aa). The helical transmembrane segment at 65–85 threads the bilayer; the sequence is FHWPGASLMLLAVLLLLGCCG. Residues 86 to 92 lie on the Lumenal side of the membrane; it reads GQPAGSR. Residues 93 to 113 form a helical membrane-spanning segment; the sequence is GVGLVNASALFLLLLLNLVLI. At 114–273 the chain is on the cytoplasmic side; sequence GRQDRLKRRE…RPVTALDNER (160 aa). S221 and S225 each carry phosphoserine. Residues 274-294 traverse the membrane as a helical segment; the sequence is FTVQSVMLHYAVPVVLAGFLI. Topologically, residues 295 to 320 are lumenal; it reads TNALRFIFSAPGVTSWQYTLLQLQVN. A helical transmembrane segment spans residues 321–341; it reads GVLPILPLLFPVLWVLATACG. Over 342-1092 the chain is Cytoplasmic; the sequence is EARVLAQMSK…RHATYGIRKC (751 aa). The DKQGIL motif lies at 417 to 422; sequence DKQGIL. Disordered regions lie at residues 439–461 and 483–541; these read VEPP…FCHP and EQER…ESDP. Positions 440 to 449 are enriched in basic and acidic residues; the sequence is EPPHSSHEDL. Phosphoserine occurs at positions 444, 445, and 454. The span at 502-511 shows a compositional bias: basic residues; the sequence is HHKAHGRSKH. 4 positions are modified to phosphoserine: S513, S518, S798, and S941. The helical transmembrane segment at 1093-1113 threads the bilayer; that stretch reads FLFLLQCQLTLVVIQFLSCLV. Topologically, residues 1114–1120 are lumenal; sequence QLPPLLS. The chain crosses the membrane as a helical span at residues 1121–1141; the sequence is TTDILWLSCFCYPLLSISLLG. At 1142–1167 the chain is on the cytoplasmic side; that stretch reads KPPHSSIMSMATGKNLQSIPKKTQHY. Residues 1168-1188 form a helical membrane-spanning segment; it reads FLLCFLLKFSLTISSCLICFG. Over 1189–1228 the chain is Lumenal; it reads FTLQSFCDSSRDRNLTNCSSVMLPSNDDRAPAWFEDFANG. N-linked (GlcNAc...) asparagine glycans are attached at residues N1202 and N1205. A helical transmembrane segment spans residues 1229–1249; the sequence is LLSAQKLTAALIVLHTVFISI. At 1250 to 1261 the chain is on the cytoplasmic side; sequence THVHRTKPLWRK. A helical transmembrane segment spans residues 1262–1282; it reads SPLTNLWWAVTVPVVLLGQVV. Residues 1283–1306 are Lumenal-facing; it reads QTAVDLQLWTHRDSHVHFGLEDVP. The helical transmembrane segment at 1307 to 1327 threads the bilayer; that stretch reads LLTWLLGCLSLVLVVVTNEIV. The Cytoplasmic segment spans residues 1328–1356; sequence KLHEIRVRVRYQKRQKLQFETKLGMNSPF. Residues 1351-1353 carry the GMN; metal-binding motif motif; the sequence is GMN.

Forms homooligomers. Expressed ubiquitously.

The protein localises to the endoplasmic reticulum membrane. In terms of biological role, could function in the uptake of Mg(2+) from the cytosol into the endoplasmic reticulum and regulate intracellular Mg(2+) homeostasis. The chain is Transmembrane protein 94 from Homo sapiens (Human).